The chain runs to 58 residues: UPF0391 membrane protein Patl_4137 (58 aa).

2 helical membrane passes run 4–24 (WALT…GGIA) and 27–47 (AAGI…LSLV).

The protein belongs to the UPF0391 family.

It is found in the cell membrane. This chain is UPF0391 membrane protein Patl_4137, found in Pseudoalteromonas atlantica (strain T6c / ATCC BAA-1087).